The following is a 574-amino-acid chain: Septation ring formation regulator EzrA (574 aa).

Over 1–7 (MSSGIIL) the chain is Extracellular. A helical transmembrane segment spans residues 8–26 (LIVAIVLLVIIAYLVGVII). The Cytoplasmic segment spans residues 27–574 (RKRNDSLITS…YEKTREHIRF (548 aa)). 3 coiled-coil regions span residues 102 to 141 (NFIR…EEKN), 274 to 350 (ELVT…ETES), and 459 to 520 (QLEA…SFEA).

This sequence belongs to the EzrA family.

It localises to the cell membrane. Its function is as follows. Negative regulator of FtsZ ring formation; modulates the frequency and position of FtsZ ring formation. Inhibits FtsZ ring formation at polar sites. Interacts either with FtsZ or with one of its binding partners to promote depolymerization. The chain is Septation ring formation regulator EzrA from Streptococcus pyogenes serotype M3 (strain SSI-1).